The primary structure comprises 493 residues: GTPase Der (493 aa).

Residues 3–166 enclose the EngA-type G 1 domain; that stretch reads PVIALVGRPN…EALGIFPKDN (164 aa). GTP-binding positions include 9–16, 56–60, and 118–121; these read GRPNVGKS, DTGGI, and NKVD. A disordered region spans residues 166–195; the sequence is NAEEEGEGEPASEEVAEGEEPTRIPGPSEK. The span at 167–184 shows a compositional bias: acidic residues; sequence AEEEGEGEPASEEVAEGE. One can recognise an EngA-type G 2 domain in the interval 198-371; it reads IKIAIIGRPN…SVQESFRSAV (174 aa). GTP contacts are provided by residues 204–211, 251–255, and 316–319; these read GRPNVGKS, DTAGV, and NKWD. The KH-like domain maps to 372 to 456; sequence TRWPTSRLTS…PIRIEYKGGE (85 aa). Basic and acidic residues predominate over residues 454-463; sequence GGENPYEGKK. Positions 454–493 are disordered; sequence GGENPYEGKKNSLTARQVNKKRRLMSHHKKAEKKKKDKRR. Positions 471-493 are enriched in basic residues; it reads VNKKRRLMSHHKKAEKKKKDKRR.

This sequence belongs to the TRAFAC class TrmE-Era-EngA-EngB-Septin-like GTPase superfamily. EngA (Der) GTPase family. In terms of assembly, associates with the 50S ribosomal subunit.

Its function is as follows. GTPase that plays an essential role in the late steps of ribosome biogenesis. This is GTPase Der from Pseudomonas aeruginosa (strain UCBPP-PA14).